Reading from the N-terminus, the 499-residue chain is Kynurenine 3-monooxygenase 3 (499 aa).

It belongs to the aromatic-ring hydroxylase family. KMO subfamily. FAD is required as a cofactor.

The protein localises to the mitochondrion outer membrane. The catalysed reaction is L-kynurenine + NADPH + O2 + H(+) = 3-hydroxy-L-kynurenine + NADP(+) + H2O. The protein operates within cofactor biosynthesis; NAD(+) biosynthesis; quinolinate from L-kynurenine: step 1/3. Its function is as follows. Catalyzes the hydroxylation of L-kynurenine (L-Kyn) to form 3-hydroxy-L-kynurenine (L-3OHKyn). Required for synthesis of quinolinic acid. This chain is Kynurenine 3-monooxygenase 3 (bna4-3), found in Aspergillus niger (strain ATCC MYA-4892 / CBS 513.88 / FGSC A1513).